Consider the following 485-residue polypeptide: MTITPQQLIALLPLLIVGLTVVVVMLSIAWRRNHFLNATLSVLGLNAALVSLWFVGQNGAMDVTPMIRVDGYAMLYTGLVLLASLATCTFAYPWLEGYKDNKEEFYLLVLIAALGGILLAGANHLAALFLGIELISLPLFGLVGYAFRQKRSLEASIKYTILSAAASSFLLFGMALVYANSGNLSFLALGKSLADNTLHEPLLLAGLGLMIVGLGFKLSLVPFHLWTPDVYQGAPAPVSTFLATASKIAIFGVVMRLFLYMPVGNSEAVRVVLGLIAFASIIFGNLMALSQTNIKRLLGYSSISHLGYLLVALIALQSGEMSMEAVGVYLAGYLFSSLGAFGVVSLMSSPYRGPDADSLFSYRGLFWHRPILSAVMTVMMLSLAGIPMTLGFIGKFYVLAVGVHAHLWWLVAAVVVGSAIGLYYYLRVAVSLYLSAPEQLNRDAPSNWQYSAGGIVVLISALLVLVLGIWPQPLISIVQLATPLM.

The next 14 helical transmembrane spans lie at 8–28, 35–55, 75–95, 105–125, 127–147, 159–179, 203–223, 235–255, 271–291, 297–317, 326–346, 374–394, 408–430, and 455–475; these read LIALLPLLIVGLTVVVVMLSI, FLNATLSVLGLNAALVSLWFV, LYTGLVLLASLATCTFAYPWL, FYLLVLIAALGGILLAGANHL, ALFLGIELISLPLFGLVGYAF, YTILSAAASSFLLFGMALVYA, LLAGLGLMIVGLGFKLSLVPF, PAPVSTFLATASKIAIFGVVM, VVLGLIAFASIIFGNLMALSQ, LLGYSSISHLGYLLVALIALQ, VGVYLAGYLFSSLGAFGVVSL, AVMTVMMLSLAGIPMTLGFIG, WWLVAAVVVGSAIGLYYYLRVAV, and IVVLISALLVLVLGIWPQPLI.

The protein belongs to the complex I subunit 2 family. As to quaternary structure, NDH-1 is composed of 13 different subunits. Subunits NuoA, H, J, K, L, M, N constitute the membrane sector of the complex.

Its subcellular location is the cell inner membrane. The enzyme catalyses a quinone + NADH + 5 H(+)(in) = a quinol + NAD(+) + 4 H(+)(out). In terms of biological role, NDH-1 shuttles electrons from NADH, via FMN and iron-sulfur (Fe-S) centers, to quinones in the respiratory chain. The immediate electron acceptor for the enzyme in this species is believed to be ubiquinone. Couples the redox reaction to proton translocation (for every two electrons transferred, four hydrogen ions are translocated across the cytoplasmic membrane), and thus conserves the redox energy in a proton gradient. In Klebsiella pneumoniae (strain 342), this protein is NADH-quinone oxidoreductase subunit N.